The following is a 180-amino-acid chain: ATP-dependent protease subunit HslV (180 aa).

Threonine 5 is an active-site residue. Na(+) is bound by residues glycine 161, cysteine 164, and threonine 167.

This sequence belongs to the peptidase T1B family. HslV subfamily. As to quaternary structure, a double ring-shaped homohexamer of HslV is capped on each side by a ring-shaped HslU homohexamer. The assembly of the HslU/HslV complex is dependent on binding of ATP.

It localises to the cytoplasm. The catalysed reaction is ATP-dependent cleavage of peptide bonds with broad specificity.. Allosterically activated by HslU binding. Its function is as follows. Protease subunit of a proteasome-like degradation complex believed to be a general protein degrading machinery. The protein is ATP-dependent protease subunit HslV of Campylobacter jejuni subsp. jejuni serotype O:2 (strain ATCC 700819 / NCTC 11168).